Consider the following 1380-residue polypeptide: Inverted formin-2 (1380 aa).

A GBD/FH3 domain is found at Met1–Gln330. 2 disordered regions span residues Leu341 to Pro391 and Ile440 to Leu541. Residues Thr343 to Lys352 are compositionally biased toward basic residues. Residues Gln367–Pro385 show a composition bias toward basic and acidic residues. Residues Val432–Ala592 enclose the FH1 domain. 2 stretches are compositionally biased toward pro residues: residues Leu446–Pro470 and Thr478–Leu541. The region spanning Tyr593–Asp981 is the FH2 domain. Coiled coils occupy residues Leu879–Asp930 and Leu956–Asn991. Residues Asp1009–Thr1024 enclose the WH2 domain. 3 disordered regions span residues Lys1026 to Asp1049, His1188 to Ala1244, and Phe1260 to Gln1380. Composition is skewed to polar residues over residues Gly1206–Ala1244, Phe1260–Arg1284, and Thr1294–Ser1303. Residues Glu1306 to Gly1322 show a composition bias toward basic and acidic residues. Over residues Ser1328–Ser1339 the composition is skewed to low complexity. The span at Val1345 to Ser1359 shows a compositional bias: basic residues.

The protein belongs to the formin homology family.

In Xenopus tropicalis (Western clawed frog), this protein is Inverted formin-2 (inf2).